The sequence spans 228 residues: UPF0758 protein stu1465 (228 aa).

In terms of domain architecture, MPN spans 103–225 (QIMSSQQVAR…YYSFREERED (123 aa)). Histidine 174, histidine 176, and aspartate 187 together coordinate Zn(2+). Positions 174–187 (HNHPSGEAYPSRND) match the JAMM motif motif.

The protein belongs to the UPF0758 family.

The polypeptide is UPF0758 protein stu1465 (Streptococcus thermophilus (strain ATCC BAA-250 / LMG 18311)).